A 358-amino-acid chain; its full sequence is Uptake hydrogenase small subunit (358 aa).

The first 45 residues, 1 to 45 (MSDIETFYDVMRRQGITRRSFMKSVRSPQHVLGLGPSFVPKIGEA), serve as a signal peptide directing secretion. [4Fe-4S] cluster-binding residues include Cys62, Cys65, Cys160, Cys194, His232, Cys235, Cys260, and Cys266. 3 residues coordinate [3Fe-4S] cluster: Cys275, Cys294, and Cys297.

Belongs to the [NiFe]/[NiFeSe] hydrogenase small subunit family. As to quaternary structure, heterodimer of a large and a small subunit. [4Fe-4S] cluster serves as cofactor. Requires [3Fe-4S] cluster as cofactor.

The protein localises to the cell membrane. It catalyses the reaction H2 + A = AH2. Functionally, this enzyme recycles the H(2) produced by nitrogenase to increase the production of ATP and to protect nitrogenase against inhibition or damage by O(2) under carbon- or phosphate-limited conditions. In Rhodobacter capsulatus (Rhodopseudomonas capsulata), this protein is Uptake hydrogenase small subunit (hupA).